The following is a 185-amino-acid chain: Ribosome-recycling factor (185 aa).

Belongs to the RRF family.

The protein resides in the cytoplasm. Functionally, responsible for the release of ribosomes from messenger RNA at the termination of protein biosynthesis. May increase the efficiency of translation by recycling ribosomes from one round of translation to another. This is Ribosome-recycling factor from Chloroflexus aggregans (strain MD-66 / DSM 9485).